We begin with the raw amino-acid sequence, 289 residues long: ATP synthase gamma chain (289 aa).

It belongs to the ATPase gamma chain family. F-type ATPases have 2 components, CF(1) - the catalytic core - and CF(0) - the membrane proton channel. CF(1) has five subunits: alpha(3), beta(3), gamma(1), delta(1), epsilon(1). CF(0) has three main subunits: a, b and c.

The protein localises to the cell inner membrane. Produces ATP from ADP in the presence of a proton gradient across the membrane. The gamma chain is believed to be important in regulating ATPase activity and the flow of protons through the CF(0) complex. This chain is ATP synthase gamma chain, found in Haemophilus influenzae (strain PittGG).